Here is a 373-residue protein sequence, read N- to C-terminus: Chorismate synthase (373 aa).

NADP(+) is bound at residue arginine 46. Residues 123–125 (RSS), 250–251 (NA), glycine 295, 310–314 (KPTPS), and arginine 337 each bind FMN.

The protein belongs to the chorismate synthase family. The cofactor is FMNH2.

It catalyses the reaction 5-O-(1-carboxyvinyl)-3-phosphoshikimate = chorismate + phosphate. It participates in metabolic intermediate biosynthesis; chorismate biosynthesis; chorismate from D-erythrose 4-phosphate and phosphoenolpyruvate: step 7/7. Catalyzes the anti-1,4-elimination of the C-3 phosphate and the C-6 proR hydrogen from 5-enolpyruvylshikimate-3-phosphate (EPSP) to yield chorismate, which is the branch point compound that serves as the starting substrate for the three terminal pathways of aromatic amino acid biosynthesis. This reaction introduces a second double bond into the aromatic ring system. The protein is Chorismate synthase of Methanococcus aeolicus (strain ATCC BAA-1280 / DSM 17508 / OCM 812 / Nankai-3).